The following is a 415-amino-acid chain: Multidrug resistance protein MdtA (415 aa).

Positions 1-21 (MKGSYKSRWVIVIVVVIAAIA) are cleaved as a signal peptide. Over residues 31–47 (DSQSAAPGATKQAQQSP) the composition is skewed to polar residues. 2 disordered regions span residues 31–60 (DSQS…GPLA) and 392–415 (EAQS…GARS). A compositionally biased stretch (basic and acidic residues) spans 399 to 415 (PEEKATSREYAKKGARS).

Belongs to the membrane fusion protein (MFP) (TC 8.A.1) family. As to quaternary structure, part of a tripartite efflux system composed of MdtA, MdtB and MdtC.

Its subcellular location is the cell inner membrane. Functionally, the MdtABC tripartite complex confers resistance against novobiocin and deoxycholate. The chain is Multidrug resistance protein MdtA from Escherichia coli O157:H7.